Reading from the N-terminus, the 348-residue chain is Farnesoic acid carboxyl-O-methyltransferase (348 aa).

Tyrosine 16 lines the S-adenosyl-L-methionine pocket. Residues tyrosine 16 and 19-23 contribute to the substrate site; that span reads HSKYQ. S-adenosyl-L-methionine contacts are provided by residues glycine 57, 57–58, asparagine 63, 94–97, 123–125, and 140–142; these read GC, FNDS, SFF, and SYS. Residue 141–145 participates in substrate binding; sequence YSLHF. Residues asparagine 162, aspartate 247, and phenylalanine 249 each contribute to the Mg(2+) site.

This sequence belongs to the methyltransferase superfamily. SABATH family. In terms of assembly, homodimer. Requires Mg(2+) as cofactor. In terms of tissue distribution, mostly expressed in leaves and, at very low levels, in roots, stems, flowers and siliques.

It carries out the reaction (2E,6E)-farnesoate + S-adenosyl-L-methionine = methyl (2E,6E)-farnesoate + S-adenosyl-L-homocysteine. It catalyses the reaction juvenile hormone III carboxylate + S-adenosyl-L-methionine = juvenile hormone III + S-adenosyl-L-homocysteine. It participates in sesquiterpene biosynthesis. Activated by Mn(2+) ions. Strongly inhibited by Cu(2+), Zn(2+), Fe(3+) and Fe(2+) ions. Moderately inhibited by Na(+) and Ca(2+) ions. Rapidly degraded at temperatures above 40 degrees Celsius. Its function is as follows. May catalyze the production of the insect juvenile hormone methyl farnesoate (MeFA) to trigger defense against insect herbivory. This Arabidopsis thaliana (Mouse-ear cress) protein is Farnesoic acid carboxyl-O-methyltransferase.